Here is a 166-residue protein sequence, read N- to C-terminus: Small ribosomal subunit protein uS5 (166 aa).

An S5 DRBM domain is found at 11 to 74 (LQEKLVAVNR…EQARRNMVKV (64 aa)).

The protein belongs to the universal ribosomal protein uS5 family. In terms of assembly, part of the 30S ribosomal subunit. Contacts proteins S4 and S8.

With S4 and S12 plays an important role in translational accuracy. Functionally, located at the back of the 30S subunit body where it stabilizes the conformation of the head with respect to the body. This is Small ribosomal subunit protein uS5 from Tolumonas auensis (strain DSM 9187 / NBRC 110442 / TA 4).